The primary structure comprises 205 residues: Ephrin-A1 (205 aa).

The first 18 residues, 1–18 (MEFFWASLLGLCCSLAAA), serve as a signal peptide directing secretion. An Ephrin RBD domain is found at 19 to 151 (NRHTVFWNSS…RLKVMIAGKI (133 aa)). An N-linked (GlcNAc...) asparagine glycan is attached at Asn-26. Intrachain disulfides connect Cys-51–Cys-92 and Cys-80–Cys-140. The GPI-anchor amidated serine moiety is linked to residue Ser-182. The propeptide at 183-205 (AAPRLFPLAWAVLLLPFLLLQIP) is removed in mature form.

Belongs to the ephrin family. As to quaternary structure, monomer. Homodimer. Forms heterodimers with EPHA2. Binds to the receptor tyrosine kinases EPHA2, EPHA3, EPHA4, EPHA5, EPHA6 and EPHA7. Also binds with low affinity to EPHA1. Post-translationally, undergoes proteolysis by a metalloprotease to give rise to a soluble monomeric form. In terms of processing, N-Glycosylation is required for binding to EPHA2 receptor and inducing its internalization.

It localises to the cell membrane. Its subcellular location is the secreted. Functionally, cell surface GPI-bound ligand for Eph receptors, a family of receptor tyrosine kinases which are crucial for migration, repulsion and adhesion during neuronal, vascular and epithelial development. Binds promiscuously Eph receptors residing on adjacent cells, leading to contact-dependent bidirectional signaling into neighboring cells. Plays an important role in angiogenesis and tumor neovascularization. The recruitment of VAV2, VAV3 and PI3-kinase p85 subunit by phosphorylated EPHA2 is critical for EFNA1-induced RAC1 GTPase activation and vascular endothelial cell migration and assembly. Exerts anti-oncogenic effects in tumor cells through activation and down-regulation of EPHA2. Activates EPHA2 by inducing tyrosine phosphorylation which leads to its internalization and degradation. Acts as a negative regulator in the tumorigenesis of gliomas by down-regulating EPHA2 and FAK. Can evoke collapse of embryonic neuronal growth cone and regulates dendritic spine morphogenesis. The protein is Ephrin-A1 (EFNA1) of Bos taurus (Bovine).